A 137-amino-acid polypeptide reads, in one-letter code: Basic phospholipase A2 homolog bothropstoxin-I (137 aa).

The signal sequence occupies residues 1-16; it reads MRTLWIMAVLLVGVEG. 7 cysteine pairs are disulfide-bonded: Cys-42-Cys-131, Cys-44-Cys-60, Cys-59-Cys-111, Cys-65-Cys-137, Cys-66-Cys-104, Cys-73-Cys-97, and Cys-91-Cys-102. The important for membrane-damaging activities in eukaryotes and bacteria; heparin-binding stretch occupies residues 121–133; sequence KKYRYHLKPFCKK.

The protein belongs to the phospholipase A2 family. Group II subfamily. K49 sub-subfamily. In terms of assembly, homodimer; non-covalently linked (probable alternative/compact dimer conformation in solution). Binds to heparin. In terms of tissue distribution, expressed by the venom gland.

It is found in the secreted. Its activity is regulated as follows. Suramin inhibits both myotoxic and muscle-paralyzing activities. Chicoric acid inhibits myotoxic activity. Zinc ions inhibits the myotoxic activity and the neuromuscular blockade. Heparin inhibits myotoxic activity. In terms of biological role, snake venom phospholipase A2 homolog that lacks enzymatic activity. Shows local myotoxic activity. Induces inflammation, since it induces edema and leukocytes infiltration. In addition, it induces NLRP3 NLRP3, ASC (PYCARD), caspase-1 (CASP1), and IL-1beta (IL1B) gene expression in the gastrocnemius muscle, showing that it is able to activate NLRP3 inflammasome. It also damages artificial and myoblast membranes by a calcium-independent mechanism, has bactericidal activity, and induces neuromuscular blockade. A model of myotoxic mechanism has been proposed: an apo Lys49-PLA2 is activated by the entrance of a hydrophobic molecule (e.g. fatty acid) at the hydrophobic channel of the protein leading to a reorientation of a monomer. This reorientation causes a transition between 'inactive' to 'active' states, causing alignment of C-terminal and membrane-docking sites (MDoS) side-by-side and putting the membrane-disruption sites (MDiS) in the same plane, exposed to solvent and in a symmetric position for both monomers. The MDoS region stabilizes the toxin on membrane by the interaction of charged residues with phospholipid head groups. Subsequently, the MDiS region destabilizes the membrane with penetration of hydrophobic residues. This insertion causes a disorganization of the membrane, allowing an uncontrolled influx of ions (i.e. calcium and sodium), and eventually triggering irreversible intracellular alterations and cell death. The chain is Basic phospholipase A2 homolog bothropstoxin-I from Bothrops jararacussu (Jararacussu).